The sequence spans 137 residues: Small ribosomal subunit protein bS16m (137 aa).

A mitochondrion-targeting transit peptide spans 1-34; that stretch reads MVHLTTLLCKAYRGGHLTIRLALGGCTNRPFYRI. Thr130 carries the phosphothreonine modification.

This sequence belongs to the bacterial ribosomal protein bS16 family. Component of the mitochondrial ribosome small subunit (28S) which comprises a 12S rRNA and about 30 distinct proteins.

It localises to the mitochondrion. In Pongo abelii (Sumatran orangutan), this protein is Small ribosomal subunit protein bS16m (MRPS16).